Reading from the N-terminus, the 379-residue chain is Cell growth-regulating nucleolar protein (379 aa).

2 consecutive C2HC LYAR-type zinc fingers follow at residues 1–26 (MVFF…SVCR) and 28–52 (CECL…VKCI). Zn(2+) contacts are provided by cysteine 6 and cysteine 9. Lysine 14 participates in a covalent cross-link: Glycyl lysine isopeptide (Lys-Gly) (interchain with G-Cter in SUMO2). Zn(2+)-binding residues include histidine 21, cysteine 25, cysteine 33, cysteine 36, histidine 48, and cysteine 51. The segment at 161–307 (PHAEISTKVP…PEDDEAPAKG (147 aa)) is disordered. 2 stretches are compositionally biased toward basic and acidic residues: residues 173–196 (KVKD…EERQ) and 203–216 (KKEL…ENSR). A coiled-coil region spans residues 175-219 (KDAVEQQGEVKKNKRERKEERQKKRKREKKELKLENHQENSRNQK). Lysine 207 participates in a covalent cross-link: Glycyl lysine isopeptide (Lys-Gly) (interchain with G-Cter in SUMO2). Serine 215 is modified (phosphoserine). Residues 229-239 (ADLEAGGEEVP) show a composition bias toward acidic residues. Serine 244 carries the phosphoserine modification. Basic and acidic residues-rich tracts occupy residues 256–265 (KDSASEEEAR) and 276–295 (SEVE…HPEG).

As to quaternary structure, interacts with PRMT5; this interaction is direct. Interacts with GNL2 and RPL23A. Interacts with nucleolin/NCL; this interaction is direct. Interacts with phosphorylated IRF3; this interaction impairs IRF3 DNA-binding activity. In terms of tissue distribution, predominantly expressed in testis.

Its subcellular location is the nucleus. The protein resides in the nucleolus. It is found in the cytoplasm. It localises to the cell projection. The protein localises to the cilium. Its subcellular location is the photoreceptor outer segment. Functionally, plays a role in the maintenance of the appropriate processing of 47S/45S pre-rRNA to 32S/30S pre-rRNAs and their subsequent processing to produce 18S and 28S rRNAs. Also acts at the level of transcription regulation. Along with PRMT5, binds the gamma-globin (HBG1/HBG2) promoter and represses its expression. In neuroblastoma cells, may also repress the expression of oxidative stress genes, including CHAC1, HMOX1, SLC7A11, ULBP1 and SNORD41 that encodes a small nucleolar RNA. Preferentially binds to a DNA motif containing 5'-GGTTAT-3'. Negatively regulates the antiviral innate immune response by targeting IRF3 and impairing its DNA-binding activity. In addition, inhibits NF-kappa-B-mediated expression of pro-inflammatory cytokines. Stimulates phagocytosis of photoreceptor outer segments by retinal pigment epithelial cells. Prevents nucleolin/NCL self-cleavage, maintaining a normal steady-state level of NCL protein in undifferentiated embryonic stem cells (ESCs), which in turn is essential for ESC self-renewal. This chain is Cell growth-regulating nucleolar protein (LYAR), found in Homo sapiens (Human).